The primary structure comprises 301 residues: GTP cyclohydrolase FolE2 (301 aa).

Belongs to the GTP cyclohydrolase IV family.

It carries out the reaction GTP + H2O = 7,8-dihydroneopterin 3'-triphosphate + formate + H(+). The protein operates within cofactor biosynthesis; 7,8-dihydroneopterin triphosphate biosynthesis; 7,8-dihydroneopterin triphosphate from GTP: step 1/1. Functionally, converts GTP to 7,8-dihydroneopterin triphosphate. In Pseudomonas syringae pv. syringae (strain B728a), this protein is GTP cyclohydrolase FolE2.